A 990-amino-acid chain; its full sequence is Aminopeptidase Q (990 aa).

Topologically, residues 2 to 13 (GPPSSSGFYVSR) are cytoplasmic. Residues 14–34 (AVALLLAGLVAALLLALAVLA) form a helical; Signal-anchor for type II membrane protein membrane-spanning segment. Residues 35–990 (ALYGHCERVP…RIAAWLRRNT (956 aa)) are Lumenal-facing. A disordered region spans residues 48 to 91 (LPGLRDLEAESSPPLRQKPTPTPKPSSARELAVTTTPSNWRPPG). 2 N-linked (GlcNAc...) asparagine glycosylation sites follow: asparagine 132 and asparagine 168. A substrate-binding site is contributed by glutamate 240. Asparagine 261, asparagine 288, asparagine 319, and asparagine 346 each carry an N-linked (GlcNAc...) asparagine glycan. 379-383 (HAMEN) contacts substrate. Histidine 415 is a binding site for Zn(2+). Glutamate 416 (proton acceptor) is an active-site residue. The Zn(2+) site is built by histidine 419 and glutamate 438. Tyrosine 503 serves as the catalytic Proton donor. Asparagine 607 and asparagine 653 each carry an N-linked (GlcNAc...) asparagine glycan.

It belongs to the peptidase M1 family. In terms of assembly, homodimer. Requires Zn(2+) as cofactor. In terms of processing, N-glycosylated. Specifically expressed in placenta and not in other tissues. Mainly found at the cell surface region of the extravillous trophoblasts. Detected on extravillous trophoblasts in the outer layer of the chorion laeve in the fetal membrane Not detected on either fetal amnionic epithelial cells or maternal decidual cells. Also detected in the migrating extravillous trophoblasts in the maternal decidual tissues (at protein level).

The protein localises to the membrane. With respect to regulation, inhibited by bestatin. In terms of biological role, metalloprotease which may be important for placentation by regulating biological activity of key peptides at the embryo-maternal interface. On synthetic substrates it shows a marked preference for Leu-4-methylcoumaryl-7-amide (Leu-MCA) over Met-MCA, Arg-LCA and Lys-LCA. Cleaves the N-terminal amino acid of several peptides such as angiotensin-3, kisspeptin-10 and endokinin C. This chain is Aminopeptidase Q, found in Homo sapiens (Human).